Reading from the N-terminus, the 507-residue chain is Maturase K (507 aa).

Belongs to the intron maturase 2 family. MatK subfamily.

It localises to the plastid. It is found in the chloroplast. In terms of biological role, usually encoded in the trnK tRNA gene intron. Probably assists in splicing its own and other chloroplast group II introns. The protein is Maturase K of Liriodendron chinense (Chinese tulip tree).